A 265-amino-acid chain; its full sequence is Arcelin-2 (265 aa).

The N-terminal stretch at 1-21 (MASSNLLTLALFLVLLTHANS) is a signal peptide. N-linked (GlcNAc...) asparagine glycosylation is found at asparagine 33 and asparagine 89. Residues cysteine 165 and cysteine 201 are joined by a disulfide bond.

Belongs to the leguminous lectin family.

In terms of biological role, seed storage. This carbohydrate-binding lectin has toxic effects on bean bruchid pests. Antibiosis properties of legume lectins are proposed to be due to the lysis of epithelial cells of the intestine by binding to the carbohydrate moieties of these proteins. This chain is Arcelin-2 (ARC2), found in Phaseolus vulgaris (Kidney bean).